The primary structure comprises 551 residues: Membrane protein insertase YidC (551 aa).

A helical transmembrane segment spans residues 6 to 26 (YFLWGALFISGYLLFLQWSQD). The segment covering 34 to 50 (SVAQSTQSQSETNSQMS) has biased composition (low complexity). The disordered stretch occupies residues 34-68 (SVAQSTQSQSETNSQMSDDLPMATQSTTEANAEIP). A compositionally biased stretch (polar residues) spans 56–68 (ATQSTTEANAEIP). 5 helical membrane-spanning segments follow: residues 340–360 (TVDYGWLWWLAKPLFWLLTLI), 363–383 (FVINWGIAIILIVVCVKAIFF), 433–453 (LGGCLPILVQMPVFLSLYWVL), 464–484 (FFLWIHDLSVMDPYFILPILM), and 509–529 (IMPVAFSIFFLWFPAGLVLYW).

The protein belongs to the OXA1/ALB3/YidC family. Type 1 subfamily. Interacts with the Sec translocase complex via SecD. Specifically interacts with transmembrane segments of nascent integral membrane proteins during membrane integration.

The protein localises to the cell inner membrane. Functionally, required for the insertion and/or proper folding and/or complex formation of integral membrane proteins into the membrane. Involved in integration of membrane proteins that insert both dependently and independently of the Sec translocase complex, as well as at least some lipoproteins. Aids folding of multispanning membrane proteins. In Marinomonas sp. (strain MWYL1), this protein is Membrane protein insertase YidC.